Here is a 132-residue protein sequence, read N- to C-terminus: uncharacterized protein (132 aa).

This sequence to M.jannaschii MJ0661.

This is an uncharacterized protein from Helicobacter pylori (strain ATCC 700392 / 26695) (Campylobacter pylori).